The following is an 892-amino-acid chain: MEKVKLTKNLKLKIKNAQLTKAAGLDKLKQKLAQAGSSDTKNSPASKAQTKEKSSKKTAGTPAPAPEVDSGATESTARRIRAKDRSSFAAEPTVTTALPGDASHLTLDAIPAMKAPEITSVTQKEQTLGECTDTSSVQQEEKKESSEETSPERVEETLIIRTRTEPKSVVSIKPKFGPTGKHINHLLAKTFKAPAKETKAASTEETTQQQPRQNDAASYNNKQQPSGTSSRPASSAPSYRRESTNNNNNAKRGSERDRSKRSDESVKAFTGRDRYGLNEGSSEEDKWRKKRVHKTKKQAEEHVVQCPAHIKIALPITVKDLAAEMKLKASELIQKLFIHGMTYVVNDVLDSQTVVEYIGLEFGCTIEIDSSAKEKLCLLENAVRDEVNATDPEKLIIRSPIVAFMGHVDHGKTTIIDALRQSNMAASEAGAITQHTGAFKCTTPVGEITVLDTPGHEAFSAMRARGAEVCDIVVLVVAGDEGIKEQTIEAIEHAKGANITIVVAINKCDKPNFNVETVYRQLAELDLLPEAWGGSIATINTSAKTGEGLQDLLEMLALQAEVLELKADPSARARGLVIESELHKGLGAVATVLVQNGTLHLGEALVFNDCYGKVKTMHDEHNQLLQSATPSTPVLITGLSAIPKAGDPFIVVKNEKVAKEIISARLAGQQRSAALQKKRPNFDAVLQNKKTLKLIIKADVQGSIEALAHSILNIRSEKVDVEILSSEVGDISESDIRLASASKATVIGFHTSVESHAEPLIKNLNVKVCLFDIIYHAVDAIKEIMTGLLDPIAEEKNLGAAEIKATFKSSQLGTIYGCLVTEGTIVRNQKIRIIRDKEVLWKGSLSSLKRLKEDVKEVKKGMECGILLDNYQQAQVGDILQCYEVIYHPQKL.

2 disordered regions span residues 32-102 (LAQA…PGDA) and 114-300 (KAPE…KQAE). Over residues 35–48 (AGSSDTKNSPASKA) the composition is skewed to polar residues. A compositionally biased stretch (basic and acidic residues) spans 139-166 (QEEKKESSEETSPERVEETLIIRTRTEP). A compositionally biased stretch (low complexity) spans 200-211 (AASTEETTQQQP). A compositionally biased stretch (polar residues) spans 212–224 (RQNDAASYNNKQQ). The segment covering 225 to 238 (PSGTSSRPASSAPS) has biased composition (low complexity). Residues 252-276 (RGSERDRSKRSDESVKAFTGRDRYG) show a composition bias toward basic and acidic residues. One can recognise a tr-type G domain in the interval 397–566 (IRSPIVAFMG…ALQAEVLELK (170 aa)). Positions 406–413 (GHVDHGKT) are G1. 406–413 (GHVDHGKT) contacts GTP. The G2 stretch occupies residues 431–435 (AITQH). The tract at residues 452-455 (DTPG) is G3. Residues 452-456 (DTPGH) and 506-509 (NKCD) contribute to the GTP site. The segment at 506 to 509 (NKCD) is G4. The segment at 542 to 544 (SAK) is G5.

The protein belongs to the TRAFAC class translation factor GTPase superfamily. Classic translation factor GTPase family. IF-2 subfamily.

It localises to the cytoplasm. In terms of biological role, one of the essential components for the initiation of protein synthesis. Protects formylmethionyl-tRNA from spontaneous hydrolysis and promotes its binding to the 30S ribosomal subunits. Also involved in the hydrolysis of GTP during the formation of the 70S ribosomal complex. This is Translation initiation factor IF-2 from Chlamydia trachomatis serovar A (strain ATCC VR-571B / DSM 19440 / HAR-13).